A 410-amino-acid polypeptide reads, in one-letter code: Cysteine desulfurase IscS (410 aa).

Residues 80-81, Asn160, Gln188, and 208-210 each bind pyridoxal 5'-phosphate; these read AT and SGH. Lys211 carries the post-translational modification N6-(pyridoxal phosphate)lysine. Thr248 is a binding site for pyridoxal 5'-phosphate. The active-site Cysteine persulfide intermediate is the Cys334. Cys334 is a binding site for [2Fe-2S] cluster.

Belongs to the class-V pyridoxal-phosphate-dependent aminotransferase family. NifS/IscS subfamily. As to quaternary structure, homodimer. Forms a heterotetramer with IscU, interacts with other sulfur acceptors. Pyridoxal 5'-phosphate is required as a cofactor.

Its subcellular location is the cytoplasm. It carries out the reaction (sulfur carrier)-H + L-cysteine = (sulfur carrier)-SH + L-alanine. It participates in cofactor biosynthesis; iron-sulfur cluster biosynthesis. In terms of biological role, master enzyme that delivers sulfur to a number of partners involved in Fe-S cluster assembly, tRNA modification or cofactor biosynthesis. Catalyzes the removal of elemental sulfur atoms from cysteine to produce alanine. Functions as a sulfur delivery protein for Fe-S cluster synthesis onto IscU, an Fe-S scaffold assembly protein, as well as other S acceptor proteins. The polypeptide is Cysteine desulfurase IscS (Rickettsia conorii (strain ATCC VR-613 / Malish 7)).